The following is a 226-amino-acid chain: Tyramine N-feruloyltransferase 4/11 (226 aa).

Residues His-29 to His-45 are important in binding site and for catalytic activity. The N-acetyltransferase domain occupies Val-72–Asp-222.

This sequence belongs to the acetyltransferase family. Homodimer.

It is found in the cytoplasm. It carries out the reaction tyramine + (E)-feruloyl-CoA = N-[(E)-feruloyl]tyramine + CoA + H(+). Its activity is regulated as follows. Inhibited by (2-hydroxyphenyl)amino sulfinyl acetic acid 1,1-dimethylethyl ester, by DEPC and by N-ethylmaleimide. In terms of biological role, synthesizes amides which are involved in stress response in the cell wall. Catalyzes the synthesis of hydroxycinnamic acid amides from hydroxycinnamoyl-CoA thioesters and various hydroxyphenylethylamines such as 4-coumaroyl-CoA and sinapoyl-CoA. This Nicotiana tabacum (Common tobacco) protein is Tyramine N-feruloyltransferase 4/11 (THT4).